A 211-amino-acid polypeptide reads, in one-letter code: Calaxin (211 aa).

3 consecutive EF-hand domains span residues 64-99 (TDDM…FLRG), 100-135 (SLEE…SLLK), and 145-180 (GIKD…ETLL). Residues Asp-77, Asp-79, Asp-81, Cys-83, Glu-88, Asp-113, Asn-115, Asp-117, Glu-124, Asp-158, Asp-160, Asp-162, Lys-164, and Asp-169 each contribute to the Ca(2+) site.

In terms of assembly, component of the outer dynein arm-docking complex along with ODAD1, ODAD2, ODAD3 and ODAD4. As to expression, strong expression in the respiratory epithelium. Expressed in the sperm.

It is found in the cytoplasm. The protein localises to the cytoskeleton. The protein resides in the cilium axoneme. Its subcellular location is the cell projection. It localises to the cilium. It is found in the flagellum. Functionally, component of the outer dynein arm-docking complex (ODA-DC) that mediates outer dynein arms (ODA) binding onto the doublet microtubule. Seems to regulate the assembly of both ODAs and their axonemal docking complex onto ciliary microtubules. Regulates ciliary and flagellar motility and is required for cilia-driven determination of body laterality. The polypeptide is Calaxin (Homo sapiens (Human)).